Here is a 67-residue protein sequence, read N- to C-terminus: Large ribosomal subunit protein bL35 (67 aa).

It belongs to the bacterial ribosomal protein bL35 family.

In Paramagnetospirillum magneticum (strain ATCC 700264 / AMB-1) (Magnetospirillum magneticum), this protein is Large ribosomal subunit protein bL35.